The primary structure comprises 226 residues: Phosphoglycolate phosphatase (226 aa).

D12 serves as the catalytic Nucleophile. Mg(2+) is bound by residues D12, D14, and D177.

It belongs to the HAD-like hydrolase superfamily. CbbY/CbbZ/Gph/YieH family. It depends on Mg(2+) as a cofactor.

It catalyses the reaction 2-phosphoglycolate + H2O = glycolate + phosphate. It participates in organic acid metabolism; glycolate biosynthesis; glycolate from 2-phosphoglycolate: step 1/1. Its function is as follows. Specifically catalyzes the dephosphorylation of 2-phosphoglycolate. Is involved in the dissimilation of the intracellular 2-phosphoglycolate formed during the DNA repair of 3'-phosphoglycolate ends, a major class of DNA lesions induced by oxidative stress. In Colwellia psychrerythraea (strain 34H / ATCC BAA-681) (Vibrio psychroerythus), this protein is Phosphoglycolate phosphatase.